The sequence spans 166 residues: Stress response protein NhaX (166 aa).

It belongs to the universal stress protein A family.

The polypeptide is Stress response protein NhaX (nhaX) (Bacillus subtilis (strain 168)).